Here is a 210-residue protein sequence, read N- to C-terminus: Thymidylate kinase (210 aa).

10-17 (GLEGAGKT) serves as a coordination point for ATP.

This sequence belongs to the thymidylate kinase family.

It catalyses the reaction dTMP + ATP = dTDP + ADP. Functionally, phosphorylation of dTMP to form dTDP in both de novo and salvage pathways of dTTP synthesis. The sequence is that of Thymidylate kinase from Erwinia tasmaniensis (strain DSM 17950 / CFBP 7177 / CIP 109463 / NCPPB 4357 / Et1/99).